Reading from the N-terminus, the 488-residue chain is MIMIITKKTLLPVTLALFSSGVMAHGYVSSVEGGVAESRAALCKFPANGTGEKNTNCGSVQWEPQSVEGPDGFPETGPPDGKIASAGLSQFSPLDEQTVDRWVKRPMQAGIQNFEWTFTANHITRNWRYYITKQDWNPNKSLTRSAFDLTPFCQISGDMAKPPMRVHHSCNVPERKDYQVILAVWEVGDTAASFYNVIDVMFDGDLPTVPDWAVGGQIYPSMDLKSGDSVYTRVFDASGENSALSTELTIETEQQGQANNWSYSLAQQINNVYDNIRAGKADGEGNFAPIYGANPIYLKEGSGLERVEIGYNIITPEPDHDLDISGLENEYQIGDEPVSLELNLTAQGDQFVELTVYNHNKEALANKQVTLNDGDSQAVSMRLSKSEPGHHMLVTRIKDSSEGSLIDQITNDFHLTEGGDPPEGDYDYIFPEGLKSYTAGSKVLATDGRIYECKPFPYSGYCIQWSPSATQFEPGVGSDWSTAWIKLN.

The first 24 residues, 1–24 (MIMIITKKTLLPVTLALFSSGVMA), serve as a signal peptide directing secretion. The Chitin-binding type-4 domain occupies 25–202 (HGYVSSVEGG…SFYNVIDVMF (178 aa)). Residues 439–480 (AGSKVLATDGRIYECKPFPYSGYCIQWSPSATQFEPGVGSDW) form the Chitin-binding type-3 domain.

Belongs to the GbpA family.

Its subcellular location is the secreted. Probably interacts with GlcNAc residues. May promote attachment to both epithelial cell surfaces and chitin. The chain is GlcNAc-binding protein A from Photobacterium profundum (strain SS9).